The sequence spans 304 residues: Galactose 1-dehydrogenase (304 aa).

This sequence belongs to the Gfo/Idh/MocA family. In terms of assembly, homodimer.

It is found in the cytoplasm. The enzyme catalyses D-galactose + NAD(+) = D-galactono-1,4-lactone + NADH + H(+). The protein operates within carbohydrate metabolism; galactose metabolism. Its function is as follows. Catalyzes the dehydrogenation of D-galactose by either NAD(+) or NADP(+). Oxidizes following sugars in decreasing order: D-fucose &gt; D-galactose &gt; L-arabinose &gt; 2-deoxy-D-galactose &gt;&gt; 4-deoxy-D-galactose &gt; 2-deoxy-2-amino-D-galactose. This Pseudomonas fluorescens protein is Galactose 1-dehydrogenase (gal).